The following is a 275-amino-acid chain: Transcription factor Ovo-like 2 (275 aa).

Positions 15–101 (SVRSWDELPD…GHLATKQRPV (87 aa)) are disordered. Composition is skewed to basic and acidic residues over residues 18–29 (SWDELPDEKRAD) and 39–49 (LLHDPPEDCRS). Residues 56–76 (GSGSSSAGEPGGAESSSSPHA) show a composition bias toward low complexity. Acidic residues predominate over residues 80–89 (ETPEPGDAEG). C2H2-type zinc fingers lie at residues 119-141 (HSCDLCGKGFRLQRMLNRHLKCH), 147-169 (HLCTFCGKGFNDTFDLKRHVRTH), 175-198 (YKCNVCNKAFTQRCSLESHLKKIH), and 214-237 (YVCEDCGYTGPTQEDLYLHVNSAH). A Phosphoserine modification is found at serine 269.

Belongs to the krueppel C2H2-type zinc-finger protein family. Interacts (via zinc-finger domains) with CEBPA (via bZIP domain); the interaction inhibits the transcription factor activity of CEBPA and is required to repress adipogenesis. In terms of tissue distribution, expressed in testis, ovary, heart and skeletal muscle. Expressed in the cornea, but absent from the corneal endothelium.

It is found in the nucleus. Its function is as follows. Zinc-finger transcription repressor factor. Plays a critical role in maintaining the identity of epithelial lineages by suppressing epithelial-to mesenchymal transition (EMT) mainly through the repression of ZEB1, an EMT inducer. Positively regulates neuronal differentiation. Suppresses cell cycling and terminal differentiation of keratinocytes by directly repressing MYC and NOTCH1. Important for the correct development of primordial germ cells in embryos. Plays dual functions in thermogenesis and adipogenesis to maintain energy balance. Essential for brown/beige adipose tissue-mediated thermogenesis, is necessary for the development of brown adipocytes. In white adipose tissues, limits adipogenesis by blocking CEBPA binding to its transcriptional targets and inhibiting its transcription factor activity. This is Transcription factor Ovo-like 2 from Homo sapiens (Human).